The following is an 835-amino-acid chain: MKVLALRHSVAQVYADTQVYTHDNSKDEYENAFLISNLTTHNILYLNYSVKTLQILNKSGIAAIEIQKMDELFTLIRCNFTYDYIDDVVYLHDYSYYTNNEIRTDQHWVTKTNIEDYLLPGWKLTYVGYNGSDTRGHYNFSFRCQNAATDDDAIIEYIYSDELDFQSFILKKIKERMTTSLPIARLSNRVFRDKLFKTLSVNHDKVVNVGPRNESMFTFLDYPSIKQFSNGPYLVKDTIKLKQERWLGKRLSQFDIGQYKNMLNVLTTLYQYYDMYHEKPIVYMIGSAPSYWIYDVKQYSDLKFETWDPLDTPYSNLHHKELFYINDVQKLKDNSILYIDIRTDRGNMDWKEWRKVVERQTADNLYIAYKYLSTGRAKICCVKMTAMDLELPISAKLLHHPTTEIRSEFYLMMDIWDSKNIKRFIPKGVLYSYINNIITENVFIQQPFKLKTLKNEYVIALYALSNDLNNREDVIKLINNQKKALITVRINNTFKDEPKVGFKNIYDWTFLPTDFETSESIITSYDGCLGIFGLSISLASKPTGNNHLFILSGTDKYFKLDQFANHMSISRRSHQIRFSESATSYSGYIFRDLSNNNFNLIGTNVENSVSGHVYNALIYYRYNYSFDLKRWIYLHSTGKASIEGGRYYEHAPIELIYACRSAREFAKLQDDLTVLRYSNEIENYINKVYSITYADDPNYFIGVKFKNIPYKYNVKVPHLTFGVLNISEQMLPDAIAILKKFKNELFGMDITTSYTYMLSDEVYVANISGVLSTYFKIYNAFYKEQITFGQSRMFIPHVTLSFSNEKTVRIDTTKLYIDSIYLRKIKGDTVFDMTG.

Positions Lys-171–Arg-245 are N7-methyltransferase activity. A 2'-O-methyltransferase activity region spans residues Trp-246 to Gly-428. The tract at residues Val-429–Asp-555 is N7-methyltransferase activity. The interval Lys-556–Thr-692 is GTase/RTPase activity. The interval Tyr-693–Gly-835 is 2'-5'-phosphodiesterase activity. Active-site for 2'-5'-phosphodiesterase activity residues include His-718, Thr-720, His-797, and Thr-799.

The protein belongs to the rotavirus VP3 family. As to quaternary structure, interacts with VP1. Interacts with VP2.

Its subcellular location is the virion. The catalysed reaction is a 5'-end diphospho-ribonucleoside in mRNA + GTP + H(+) = a 5'-end (5'-triphosphoguanosine)-ribonucleoside in mRNA + diphosphate. The enzyme catalyses a 5'-end (5'-triphosphoguanosine)-ribonucleoside in mRNA + S-adenosyl-L-methionine = a 5'-end (N(7)-methyl 5'-triphosphoguanosine)-ribonucleoside in mRNA + S-adenosyl-L-homocysteine. It catalyses the reaction 5'-triphosphoadenylyl-(2'-&gt;5')-adenylyl-(2'-&gt;5')-adenosine + 2 H2O = 2 AMP + ATP + 2 H(+). Multifunctional enzyme involved in mRNA capping. Catalyzes the formation of the 5' cap structure on the viral plus-strand transcripts. Specifically binds to GTP and displays guanylyltransferase and methyltransferase activities. Has affinity for ssRNA but not for dsRNA. Capping activity is non-specific and caps RNAs that initiate with either a G or an A residue. Together with VP1 polymerase, forms a VP1-VP3 complex positioned near the channels situated at each of the five-fold vertices of the core. Following infection, the outermost layer of the virus is lost, leaving a double-layered particle (DLP) made up of the core and VP6 shell. VP1 then catalyzes the transcription of fully conservative plus-strand genomic RNAs that are capped by VP3 and extruded through the DLP's channels into the cytoplasm where they function as mRNAs for translation of viral proteins. DLPs probably have an RNA triphosphatase activity as well, whereas open cores do not. Functionally, counteracts the host innate immune response thanks to its phosphodiesterase that degrades the 5'-triphosphorylated, 2'-5' linked adenylate oligomers produced by the host cell IFN-inducible 2',5'-oligoadenylate synthetase (OAS). The host RNaseL is therefore not activated. The sequence is that of Protein VP3 from Homo sapiens (Human).